Here is a 401-residue protein sequence, read N- to C-terminus: Lipid-A-disaccharide synthase (401 aa).

The protein belongs to the LpxB family.

The enzyme catalyses a lipid X + a UDP-2-N,3-O-bis[(3R)-3-hydroxyacyl]-alpha-D-glucosamine = a lipid A disaccharide + UDP + H(+). It functions in the pathway bacterial outer membrane biogenesis; LPS lipid A biosynthesis. In terms of biological role, condensation of UDP-2,3-diacylglucosamine and 2,3-diacylglucosamine-1-phosphate to form lipid A disaccharide, a precursor of lipid A, a phosphorylated glycolipid that anchors the lipopolysaccharide to the outer membrane of the cell. This is Lipid-A-disaccharide synthase from Ruegeria pomeroyi (strain ATCC 700808 / DSM 15171 / DSS-3) (Silicibacter pomeroyi).